The chain runs to 216 residues: Probable GTP-binding protein EngB (216 aa).

The EngB-type G domain maps to 37–214 (GSVEIAFAGR…RAAMIRLLDE (178 aa)). Residues 45–52 (GRSNVGKS), 72–76 (GRTQE), 92–95 (DMPG), 159–162 (TKAD), and 193–195 (TSS) contribute to the GTP site. The Mg(2+) site is built by serine 52 and threonine 74.

The protein belongs to the TRAFAC class TrmE-Era-EngA-EngB-Septin-like GTPase superfamily. EngB GTPase family. The cofactor is Mg(2+).

Functionally, necessary for normal cell division and for the maintenance of normal septation. This is Probable GTP-binding protein EngB from Rhodopseudomonas palustris (strain ATCC BAA-98 / CGA009).